A 699-amino-acid chain; its full sequence is Elongation factor G (699 aa).

The region spanning Glu-8–Met-288 is the tr-type G domain. Residues Ala-17 to Thr-24, Asp-86 to His-90, and Asn-140 to Asp-143 contribute to the GTP site.

It belongs to the TRAFAC class translation factor GTPase superfamily. Classic translation factor GTPase family. EF-G/EF-2 subfamily.

The protein localises to the cytoplasm. Catalyzes the GTP-dependent ribosomal translocation step during translation elongation. During this step, the ribosome changes from the pre-translocational (PRE) to the post-translocational (POST) state as the newly formed A-site-bound peptidyl-tRNA and P-site-bound deacylated tRNA move to the P and E sites, respectively. Catalyzes the coordinated movement of the two tRNA molecules, the mRNA and conformational changes in the ribosome. The sequence is that of Elongation factor G from Rhizobium leguminosarum bv. trifolii (strain WSM2304).